Consider the following 260-residue polypeptide: Coiled-coil domain-containing protein 127 (260 aa).

Residues 49 to 135 adopt a coiled-coil conformation; the sequence is QKEVEKEREA…QVMQEKRQVQ (87 aa).

The protein is Coiled-coil domain-containing protein 127 (CCDC127) of Homo sapiens (Human).